A 510-amino-acid polypeptide reads, in one-letter code: NAD(P)H-quinone oxidoreductase subunit 2 A, chloroplastic (510 aa).

Helical transmembrane passes span 24–44 (LLLF…GLIL), 59–79 (WFYF…LFRW), 99–119 (IFQF…VEYI), 124–144 (MAIT…MFLC), 149–169 (LITL…LSGY), 183–203 (YLLM…WLYG), 229–249 (ISIA…PAPF), 295–315 (WHLL…LIAI), 323–343 (MLAY…IVGD), 354–374 (YMLF…SFGL), 395–415 (ALSL…AGFF), and 418–438 (LHLF…IGLL).

The protein belongs to the complex I subunit 2 family. NDH is composed of at least 16 different subunits, 5 of which are encoded in the nucleus.

It is found in the plastid. Its subcellular location is the chloroplast thylakoid membrane. The enzyme catalyses a plastoquinone + NADH + (n+1) H(+)(in) = a plastoquinol + NAD(+) + n H(+)(out). It catalyses the reaction a plastoquinone + NADPH + (n+1) H(+)(in) = a plastoquinol + NADP(+) + n H(+)(out). NDH shuttles electrons from NAD(P)H:plastoquinone, via FMN and iron-sulfur (Fe-S) centers, to quinones in the photosynthetic chain and possibly in a chloroplast respiratory chain. The immediate electron acceptor for the enzyme in this species is believed to be plastoquinone. Couples the redox reaction to proton translocation, and thus conserves the redox energy in a proton gradient. The chain is NAD(P)H-quinone oxidoreductase subunit 2 A, chloroplastic from Dioscorea elephantipes (Elephant's foot yam).